The primary structure comprises 270 residues: 4-hydroxy-tetrahydrodipicolinate reductase (270 aa).

Residues 8-13 (GALGRM), D34, 102-104 (GTT), and 128-131 (SQNY) each bind NAD(+). H160 serves as the catalytic Proton donor/acceptor. A (S)-2,3,4,5-tetrahydrodipicolinate-binding site is contributed by H161. K164 (proton donor) is an active-site residue. 170–171 (GT) is a binding site for (S)-2,3,4,5-tetrahydrodipicolinate.

This sequence belongs to the DapB family.

It localises to the cytoplasm. The enzyme catalyses (S)-2,3,4,5-tetrahydrodipicolinate + NAD(+) + H2O = (2S,4S)-4-hydroxy-2,3,4,5-tetrahydrodipicolinate + NADH + H(+). It carries out the reaction (S)-2,3,4,5-tetrahydrodipicolinate + NADP(+) + H2O = (2S,4S)-4-hydroxy-2,3,4,5-tetrahydrodipicolinate + NADPH + H(+). It functions in the pathway amino-acid biosynthesis; L-lysine biosynthesis via DAP pathway; (S)-tetrahydrodipicolinate from L-aspartate: step 4/4. Its function is as follows. Catalyzes the conversion of 4-hydroxy-tetrahydrodipicolinate (HTPA) to tetrahydrodipicolinate. This Methanococcus maripaludis (strain C5 / ATCC BAA-1333) protein is 4-hydroxy-tetrahydrodipicolinate reductase.